The sequence spans 124 residues: Small ribosomal subunit protein uS12 (124 aa).

Position 89 is a 3-methylthioaspartic acid (Asp89).

Belongs to the universal ribosomal protein uS12 family. In terms of assembly, part of the 30S ribosomal subunit. Contacts proteins S8 and S17. May interact with IF1 in the 30S initiation complex.

In terms of biological role, with S4 and S5 plays an important role in translational accuracy. Interacts with and stabilizes bases of the 16S rRNA that are involved in tRNA selection in the A site and with the mRNA backbone. Located at the interface of the 30S and 50S subunits, it traverses the body of the 30S subunit contacting proteins on the other side and probably holding the rRNA structure together. The combined cluster of proteins S8, S12 and S17 appears to hold together the shoulder and platform of the 30S subunit. The chain is Small ribosomal subunit protein uS12 from Shewanella denitrificans (strain OS217 / ATCC BAA-1090 / DSM 15013).